The primary structure comprises 617 residues: mRNA export factor MEX67 (617 aa).

Positions 1 to 10 are enriched in gly residues; sequence MSYRGRGGGY. Residues 1-24 are disordered; sequence MSYRGRGGGYNNNRGQFSSGPHQH. LRR repeat units follow at residues 185-206, 211-232, and 237-258; these read DVDS…TSMA, KLQN…ETWR, and FLRE…AEIQ. The region spanning 309–499 is the NTF2 domain; it reads LATNFIANYL…MIVASDTLLI (191 aa). 2 disordered regions span residues 442-469 and 513-554; these read EVDG…HKRI and LPSN…TTAD. Low complexity-rich tracts occupy residues 445-459 and 526-542; these read GSAS…GGSR and ATST…TTPQ. The TAP-C domain occupies 565–617; sequence QIQQELLVKILLETKLNINYGIMLCEQSNWDYQQASVNFKNSAASLPSDAFVQ.

This sequence belongs to the NXF family. Interacts with nucleoporin complex protein MTR2.

It is found in the nucleus. The protein resides in the cytoplasm. Involved in the export of mRNA from the nucleus to the cytoplasm. The chain is mRNA export factor MEX67 from Candida albicans (strain SC5314 / ATCC MYA-2876) (Yeast).